A 155-amino-acid chain; its full sequence is Ribosomal RNA large subunit methyltransferase H (155 aa).

Residues L72, G103, and 122 to 127 (LSALTL) contribute to the S-adenosyl-L-methionine site.

Belongs to the RNA methyltransferase RlmH family. As to quaternary structure, homodimer.

The protein localises to the cytoplasm. The catalysed reaction is pseudouridine(1915) in 23S rRNA + S-adenosyl-L-methionine = N(3)-methylpseudouridine(1915) in 23S rRNA + S-adenosyl-L-homocysteine + H(+). Functionally, specifically methylates the pseudouridine at position 1915 (m3Psi1915) in 23S rRNA. This Citrobacter koseri (strain ATCC BAA-895 / CDC 4225-83 / SGSC4696) protein is Ribosomal RNA large subunit methyltransferase H.